The sequence spans 428 residues: uncharacterized protein (428 aa).

Residues Lys241–Glu351 enclose the Glutaredoxin domain. Positions Glu386–Val401 are enriched in acidic residues. The tract at residues Glu386–Arg405 is disordered.

This is an uncharacterized protein from Arabidopsis thaliana (Mouse-ear cress).